The chain runs to 569 residues: Cell death protein 4 (569 aa).

The region spanning 1–91 (MLCEIECRAL…HLKDFLDEYL (91 aa)) is the CARD domain. An NB-ARC domain is found at 116–442 (DRKLLLGNVP…IWSCVIPVDI (327 aa)). Residues F131, 162 to 167 (GSGKSV), and Q171 contribute to the ATP site. S166 is a Mg(2+) binding site.

As to quaternary structure, associates as an asymmetric homodimer with ced-9. Upon release from ced-9, forms an octamer, known as the apoptosome, and interacts with ced-3; the interaction results in ced-3 autoproteolytic cleavage and activation. The octamer (a tetramer of an asymmetric dimer) also interacts with two processed ced-3 to form a stable holoenzyme. Interacts with sex-determining protein fem-1. May form a complex composed of ced-3, ced-4 and mac-1 or of ced-9, ced-4 and mac-1. Within the complex, interacts with ced-4.

It is found in the mitochondrion. The protein resides in the cytoplasm. Its subcellular location is the perinuclear region. Functionally, plays a major role in programmed cell death (PCD, apoptosis). egl-1 binds to and directly inhibits the activity of ced-9, releasing the cell death activator ced-4 from a ced-9/ced-4 containing protein complex and allowing ced-4 to induce caspase ced-3 autoproteolytic cleavage and activation. Also forms a holoenzyme with processed ced-3 enhancing ced-3 activity. Component of the egl-1, ced-9, ced-4 and ced-3 apoptotic signaling cascade required for the initiation of programmed cell death in cells fated to die during embryonic and postembryonic development. During oogenesis, required for germline apoptosis downstream of ced-9 and upstream of ced-3 but independently of egl-1. May regulate germline apoptosis in response to DNA damage, probably downstream of let-60/ras and mpk-1 pathway. Regulates CEP neuron apoptosis in response to high Al(3+) levels. During male tail morphogenesis, promotes apoptosis of the tail-spike cell. During larval development, required for the elimination of transient presynaptic components downstream of egl-1 and ced-9 and upstream of ced-3 apoptotic pathway. Together with ain-1, a component of the miRNA-induced-silencing complex (miRISC), and probably upstream of ced-3, regulates temporal cell fate patterning during larval development. May play a role in resistance to S.typhimurium-mediated infection. This Caenorhabditis briggsae protein is Cell death protein 4.